We begin with the raw amino-acid sequence, 554 residues long: 4-coumarate--CoA ligase 3 (554 aa).

ATP-binding residues include S188, S189, G190, T191, T192, and K196. The (E)-4-coumaroyl-AMP site is built by Y238 and S242. K259 contacts CoA. Residues 261–330 (DLGALVDLVR…AKIPNAVLGQ (70 aa)) form an SBD1 region. A308, Q330, G331, T335, and M343 together coordinate (E)-4-coumaroyl-AMP. ATP contacts are provided by Q330, G331, and T335. Residues 331–398 (GYGMTEAGPV…IRGEQIMKGY (68 aa)) form an SBD2 region. ATP is bound by residues D419 and R434. (E)-4-coumaroyl-AMP-binding residues include K436 and K440. Positions 442 and 443 each coordinate CoA. K525 provides a ligand contact to ATP.

It belongs to the ATP-dependent AMP-binding enzyme family. It depends on Mg(2+) as a cofactor. Expressed in root exodermis and epidermis cells, stem vascular cells, leaf developing vascular bundle cells and parenchyma cells, lemma, palea, stamens and pistil.

It carries out the reaction (E)-ferulate + ATP + CoA = (E)-feruloyl-CoA + AMP + diphosphate. It catalyses the reaction (E)-4-coumarate + ATP + CoA = (E)-4-coumaroyl-CoA + AMP + diphosphate. The catalysed reaction is (E)-caffeate + ATP + CoA = (E)-caffeoyl-CoA + AMP + diphosphate. The enzyme catalyses (E)-cinnamate + ATP + CoA = (E)-cinnamoyl-CoA + AMP + diphosphate. It carries out the reaction (E)-ferulate + ATP + H(+) = (E)-feruloyl-AMP + diphosphate. It catalyses the reaction (E)-feruloyl-AMP + CoA = (E)-feruloyl-CoA + AMP + H(+). The catalysed reaction is (E)-4-coumarate + ATP + H(+) = (E)-4-coumaroyl-AMP + diphosphate. The enzyme catalyses (E)-4-coumaroyl-AMP + CoA = (E)-4-coumaroyl-CoA + AMP + H(+). It carries out the reaction (E)-caffeate + ATP + H(+) = (E)-caffeoyl-AMP + diphosphate. It catalyses the reaction (E)-caffeoyl-AMP + CoA = (E)-caffeoyl-CoA + AMP + H(+). The protein operates within phytoalexin biosynthesis; 3,4',5-trihydroxystilbene biosynthesis; 3,4',5-trihydroxystilbene from trans-4-coumarate: step 1/2. In terms of biological role, involved in the phenylpropanoid metabolism by mediating the activation of a number of hydroxycinnamates for the biosynthesis of monolignols and other phenolic secondary metabolites. Catalyzes the formation of CoA esters of cinnamate, 4-coumarate, caffeate and ferulate. Is more efficient with substrates in the following order: ferulate &gt; 4-coumarate &gt; caffeate &gt; cinnamate. Possesses very high activity compared to 4CL1, 4CL2, 4CL4 and 4CL5. Cannot convert sinapate to its corresponding CoA ester. May play a role in the synthesis of lignin as well as other phenolic compounds. Follows a two-step reaction mechanism, wherein the carboxylate substrate first undergoes adenylation by ATP, followed by a thioesterification in the presence of CoA to yield the final CoA thioester. The sequence is that of 4-coumarate--CoA ligase 3 from Oryza sativa subsp. japonica (Rice).